A 372-amino-acid chain; its full sequence is N-methyl-L-tryptophan oxidase (372 aa).

Position 4–34 (4–34 (DLIIIGSGSVGAAAGYYATRAGLNVLMTDAH)) interacts with FAD. Cysteine 308 is modified (S-8alpha-FAD cysteine).

This sequence belongs to the MSOX/MTOX family. MTOX subfamily. In terms of assembly, monomer. FAD serves as cofactor.

The catalysed reaction is N(alpha)-methyl-L-tryptophan + O2 + H2O = L-tryptophan + formaldehyde + H2O2. Catalyzes the oxidative demethylation of N-methyl-L-tryptophan. This chain is N-methyl-L-tryptophan oxidase, found in Shigella dysenteriae serotype 1 (strain Sd197).